The primary structure comprises 332 residues: Procathepsin L (332 aa).

An N-terminal signal peptide occupies residues 1–17 (MHPLLFLAGLCLGVASA). The propeptide at 18–112 (APQLYQSLDA…KVFQAPFFVE (95 aa)) is activation peptide. Glutamate 121 is a binding site for Zn(2+). The active site involves cysteine 137. Zn(2+) contacts are provided by glutamate 162, aspartate 183, glutamate 198, and aspartate 208. Cysteines 168 and 210 form a disulfide. The N-linked (GlcNAc...) asparagine glycan is linked to asparagine 220. Residues aspartate 226, aspartate 249, aspartate 272, and aspartate 274 each coordinate Zn(2+). Cysteine 268 and cysteine 321 form a disulfide bridge. Residue histidine 275 is part of the active site. A propeptide spanning residues 288-290 (ETE) is cleaved from the precursor. Residue asparagine 299 is part of the active site.

The protein belongs to the peptidase C1 family. In terms of assembly, dimer of a heavy and a light chain linked by disulfide bonds. Interacts with Long isoform of CD74/Ii chain; the interaction stabilizes the conformation of mature CTSL. Post-translationally, during export along the endocytic pathway, pro-CTSL undergoes several proteolytic cleavages to generate the CTSL single-chain and two-chain mature forms, composed of a heavy chain linked to a light chain by disulfide bonds. Autocleavage; produces the single-chain CTSL after cleavage of the propeptide. The cleavage can be intermolecular. Expressed in the endometrium.

The protein localises to the lysosome. It localises to the apical cell membrane. Its subcellular location is the cytoplasmic vesicle. The protein resides in the secretory vesicle. It is found in the chromaffin granule. The protein localises to the secreted. It localises to the extracellular space. The enzyme catalyses Specificity close to that of papain. As compared to cathepsin B, cathepsin L exhibits higher activity toward protein substrates, but has little activity on Z-Arg-Arg-NHMec, and no peptidyl-dipeptidase activity.. Its activity is regulated as follows. Inhibited by the propeptide produced by autocleavage. Long isoform of CD74/Ii chain stabilizes the conformation of mature CTSL by binding to its active site and serving as a chaperone to help maintain a pool of mature enzyme in endocytic compartments and extracellular space of APCs. IFNG enhances the conversion into the CTSL mature and active form. Inhibited by CST6. Inhibited by the glycopeptide antibiotic teicoplanin. Inhibited by amantadine. Functionally, thiol protease important for the overall degradation of proteins in lysosomes. Plays a critical for normal cellular functions such as general protein turnover, antigen processing and bone remodeling. Involved in the solubilization of cross-linked TG/thyroglobulin and in the subsequent release of thyroid hormone thyroxine (T4) by limited proteolysis of TG/thyroglobulin in the thyroid follicle lumen. In neuroendocrine chromaffin cells secretory vesicles, catalyzes the prohormone proenkephalin processing to the active enkephalin peptide neurotransmitter. In thymus, regulates CD4(+) T cell positive selection by generating the major histocompatibility complex class II (MHCII) bound peptide ligands presented by cortical thymic epithelial cells. Also mediates invariant chain processing in cortical thymic epithelial cells. Major elastin-degrading enzyme at neutral pH. Accumulates as a mature and active enzyme in the extracellular space of antigen presenting cells (APCs) to regulate degradation of the extracellular matrix in the course of inflammation. Secreted form generates endostatin from COL18A1. Critical for cardiac morphology and function. Plays an important role in hair follicle morphogenesis and cycling, as well as epidermal differentiation. Required for maximal stimulation of steroidogenesis by TIMP1. The sequence is that of Procathepsin L (CTSL) from Felis catus (Cat).